A 128-amino-acid chain; its full sequence is Small ribosomal subunit protein uS9 (128 aa).

Residues 97-113 (RSEGFMTRDSRSVERKK) show a composition bias toward basic and acidic residues. The disordered stretch occupies residues 97-128 (RSEGFMTRDSRSVERKKPGQPKARRRFQFSKR). A compositionally biased stretch (basic residues) spans 114–128 (PGQPKARRRFQFSKR).

This sequence belongs to the universal ribosomal protein uS9 family.

The chain is Small ribosomal subunit protein uS9 from Phocaeicola vulgatus (strain ATCC 8482 / DSM 1447 / JCM 5826 / CCUG 4940 / NBRC 14291 / NCTC 11154) (Bacteroides vulgatus).